We begin with the raw amino-acid sequence, 497 residues long: MKFNDELILLLKARYPIIYINTIEEDRVEYIIRKHIKANLNRSIYSWDFVDGYTNNPNNEGFAKRNPLQALELIERLTSETPALFLLKDFNRFLTDISISRKLKNVSRILKLQPKTIIIIGSDFQIPKELQDLITVLQFNLPVENEITQELTRLVNSLNLTIDPSLFESLTRACQGLSLERIRRVLSKIIATHKTIDENSISILLSEKKQIISQTEILEYWSVNEKMGNIGGVDNLKDWLKKRKTSFTIQASNYGLPTPRGLLLIGIQGTGKSLTAKAIATEWQLPLLKLDVGRLFGGIVGESESRLRQMIDVAETLSPCILWIDEMDKAFSNNDSRGDSGTSNRVLATFISWLSEKTKPVFVVATANNVDLLPLEIIRKGRFDEIFFLDLPELEERKEIFKIHIQEFRPNSWKLFDYKKLAQLSESFSGAEIRQSIIEAMYQAFDQQREFTTDDICLALKQLIPLAQLENSQTLKLQSWASSGRIRLASSKRISIN.

266 to 273 (GIQGTGKS) is a binding site for ATP.

The protein belongs to the AAA ATPase family. Highly divergent.

The protein localises to the plastid. It is found in the chloroplast. This is an uncharacterized protein from Trieres chinensis (Marine centric diatom).